The sequence spans 251 residues: HTH-type transcriptional regulator UlaR (251 aa).

In terms of domain architecture, HTH deoR-type spans 3 to 58 (EAQRHQILLEMLAQLGFVTVEKVVERLGISPATARRDINKLDESGKLKKVRNGAEA). Positions 20–39 (VTVEKVVERLGISPATARRD) form a DNA-binding region, H-T-H motif.

The protein localises to the cytoplasm. Its function is as follows. Represses ulaG and the ulaABCDEF operon. The protein is HTH-type transcriptional regulator UlaR of Escherichia coli O139:H28 (strain E24377A / ETEC).